The primary structure comprises 649 residues: MKKEPVHILPLYLPCLLMFLLSSLRQITGDARARAVKVTCSPLLEHNETAYVPNFVATMEKISTQVQTSGFGVALTGTGPDANYGLAQCYGDLPLNDCVLCYAEARTMLPQCYPQNGGRIFLDGCFMRAENYSFYNEYKGPEDSIVCGNTTRKNKTFGDAVRQGLRNAVTEASGTGGYARASAKAGESESESAFVLANCWRTLSPDSCKQCLENASASVVKGCLPWSEGRALHTGCFLRYSDQDFLNKIPRNGRSRGSVVVIVVSVLSSVVVFMIGVAVSVYICKRRTIKRKRRGSKDVEKMAKTLKDSSLNFKYSTLEKATGSFDNANKLGQGGFGTVYKGVLPDGRDIAVKRLFFNNRHRATDFYNEVNMISTVEHKNLVRLLGCSCSGPESLLVYEYLQNKSLDRFIFDVNRGKTLDWQRRYTIIVGTAEGLVYLHEQSSVKIIHRDIKASNILLDSKLQAKIADFGLARSFQDDKSHISTAIAGTLGYMAPEYLAHGQLTEMVDVYSFGVLVLEIVTGKQNTKSKMSDYSDSLITEAWKHFQSGELEKIYDPNLDWKSQYDSHIIKKEIARVVQIGLLCTQEIPSLRPPMSKLLHMLKNKEEVLPLPSNPPFMDERVMELRDGSDGDSAGCASLATVSQSSFYGR.

Residues 1–29 form the signal peptide; the sequence is MKKEPVHILPLYLPCLLMFLLSSLRQITG. The Extracellular portion of the chain corresponds to 30–258; sequence DARARAVKVT…IPRNGRSRGS (229 aa). Gnk2-homologous domains lie at 33–134 and 139–245; these read ARAV…NYSF and KGPE…DQDF. Residues Asn-47, Asn-131, Asn-149, Asn-154, and Asn-214 are each glycosylated (N-linked (GlcNAc...) asparagine). A helical membrane pass occupies residues 259-279; it reads VVVIVVSVLSSVVVFMIGVAV. At 280–649 the chain is on the cytoplasmic side; that stretch reads SVYICKRRTI…TVSQSSFYGR (370 aa). One can recognise a Protein kinase domain in the interval 325–608; it reads FDNANKLGQG…HMLKNKEEVL (284 aa). ATP is bound by residues 331–339 and Lys-353; that span reads LGQGGFGTV. The residue at position 398 (Tyr-398) is a Phosphotyrosine. Asp-450 acts as the Proton acceptor in catalysis. Ser-454 and Ser-483 each carry phosphoserine. Phosphothreonine occurs at positions 484 and 489. Residue Tyr-497 is modified to Phosphotyrosine.

This sequence belongs to the protein kinase superfamily. Ser/Thr protein kinase family. CRK subfamily.

The protein localises to the membrane. It catalyses the reaction L-seryl-[protein] + ATP = O-phospho-L-seryl-[protein] + ADP + H(+). The enzyme catalyses L-threonyl-[protein] + ATP = O-phospho-L-threonyl-[protein] + ADP + H(+). The polypeptide is Cysteine-rich receptor-like protein kinase 2 (CRK2) (Arabidopsis thaliana (Mouse-ear cress)).